The primary structure comprises 188 residues: dCTP deaminase (188 aa).

DCTP contacts are provided by residues 111 to 116, 135 to 137, Gln156, Tyr170, and Gln180; these read KSTYAR and TLE. The active-site Proton donor/acceptor is the Glu137.

Belongs to the dCTP deaminase family. As to quaternary structure, homotrimer.

The enzyme catalyses dCTP + H2O + H(+) = dUTP + NH4(+). It participates in pyrimidine metabolism; dUMP biosynthesis; dUMP from dCTP (dUTP route): step 1/2. Its function is as follows. Catalyzes the deamination of dCTP to dUTP. This is dCTP deaminase from Chromohalobacter salexigens (strain ATCC BAA-138 / DSM 3043 / CIP 106854 / NCIMB 13768 / 1H11).